The sequence spans 428 residues: Chaperone SurA (428 aa).

Positions 1–20 are cleaved as a signal peptide; the sequence is MKNWKTLLLGIAMIANTSFA. 2 PpiC domains span residues 171–272 and 282–382; these read STEL…KVND and VTEV…ELLD.

It is found in the periplasm. It catalyses the reaction [protein]-peptidylproline (omega=180) = [protein]-peptidylproline (omega=0). In terms of biological role, chaperone involved in the correct folding and assembly of outer membrane proteins. Recognizes specific patterns of aromatic residues and the orientation of their side chains, which are found more frequently in integral outer membrane proteins. May act in both early periplasmic and late outer membrane-associated steps of protein maturation. The sequence is that of Chaperone SurA from Salmonella choleraesuis (strain SC-B67).